The sequence spans 230 residues: Orotidine 5'-phosphate decarboxylase (230 aa).

Substrate-binding positions include D10, K32, 59–68 (DLKYHDIPNT), T119, R180, Q189, G209, and R210. K61 acts as the Proton donor in catalysis.

Belongs to the OMP decarboxylase family. Type 1 subfamily. As to quaternary structure, homodimer.

It carries out the reaction orotidine 5'-phosphate + H(+) = UMP + CO2. It functions in the pathway pyrimidine metabolism; UMP biosynthesis via de novo pathway; UMP from orotate: step 2/2. Catalyzes the decarboxylation of orotidine 5'-monophosphate (OMP) to uridine 5'-monophosphate (UMP). In Haemophilus influenzae (strain PittEE), this protein is Orotidine 5'-phosphate decarboxylase.